The primary structure comprises 445 residues: Argininosuccinate lyase (445 aa).

The protein belongs to the lyase 1 family. Argininosuccinate lyase subfamily.

It localises to the cytoplasm. It carries out the reaction 2-(N(omega)-L-arginino)succinate = fumarate + L-arginine. It functions in the pathway amino-acid biosynthesis; L-arginine biosynthesis; L-arginine from L-ornithine and carbamoyl phosphate: step 3/3. This Xylella fastidiosa (strain Temecula1 / ATCC 700964) protein is Argininosuccinate lyase.